A 490-amino-acid chain; its full sequence is GTPase Der (490 aa).

EngA-type G domains follow at residues 3-166 (PVVA…MDDV) and 203-376 (IKLA…DSST). GTP-binding positions include 9–16 (GRPNVGKS), 56–60 (DTGGI), 118–121 (NKTD), 209–216 (GRPNVGKS), 256–260 (DTAGV), and 321–324 (NKWD). A KH-like domain is found at 377-461 (RRVSTAMLTR…PIRIQFKEGE (85 aa)).

This sequence belongs to the TRAFAC class TrmE-Era-EngA-EngB-Septin-like GTPase superfamily. EngA (Der) GTPase family. Associates with the 50S ribosomal subunit.

Its function is as follows. GTPase that plays an essential role in the late steps of ribosome biogenesis. This is GTPase Der from Salmonella choleraesuis (strain SC-B67).